Here is a 141-residue protein sequence, read N- to C-terminus: Myosin regulatory light chain cdc4 (141 aa).

2 positions are modified to phosphoserine: Ser-2 and Ser-6. 3 consecutive EF-hand domains span residues 3 to 38, 74 to 109, and 109 to 141; these read TDDS…CGQN, GDPE…LGEK, and KLSN…ILAN. Ca(2+) is bound by residues Asp-87, Asp-89, Thr-91, Met-93, and Glu-98.

As to quaternary structure, binds to myosin II chains myo2 and myo3. Interacts with vps27 and a PI 4-kinase pik1. Post-translationally, phosphorylated on either Ser-2 or Ser-6 but not both. Phosphorylation is not essential for the function of the protein.

The protein localises to the cytoplasm. Its function is as follows. Involved in cytokinesis. Required for the formation and function of the contractile ring. The sequence is that of Myosin regulatory light chain cdc4 (cdc4) from Schizosaccharomyces pombe (strain 972 / ATCC 24843) (Fission yeast).